A 41-amino-acid polypeptide reads, in one-letter code: Large ribosomal subunit protein bL36 (41 aa).

This sequence belongs to the bacterial ribosomal protein bL36 family.

This is Large ribosomal subunit protein bL36 from Zymomonas mobilis subsp. mobilis (strain ATCC 31821 / ZM4 / CP4).